The sequence spans 429 residues: Trigger factor (429 aa).

The PPIase FKBP-type domain maps to 164–249; that stretch reads GDTAVIDFEG…VKEVKTKVLP (86 aa).

Belongs to the FKBP-type PPIase family. Tig subfamily.

It localises to the cytoplasm. It carries out the reaction [protein]-peptidylproline (omega=180) = [protein]-peptidylproline (omega=0). Functionally, involved in protein export. Acts as a chaperone by maintaining the newly synthesized protein in an open conformation. Functions as a peptidyl-prolyl cis-trans isomerase. The chain is Trigger factor from Lysinibacillus sphaericus (strain C3-41).